The chain runs to 260 residues: 3-methyl-2-oxobutanoate hydroxymethyltransferase (260 aa).

Residues D44 and D83 each contribute to the Mg(2+) site. 3-methyl-2-oxobutanoate-binding positions include 44–45, D83, and K113; that span reads DS. Residue E115 coordinates Mg(2+). E183 functions as the Proton acceptor in the catalytic mechanism.

Belongs to the PanB family. As to quaternary structure, homodecamer; pentamer of dimers. Mg(2+) is required as a cofactor.

The protein localises to the cytoplasm. The enzyme catalyses 3-methyl-2-oxobutanoate + (6R)-5,10-methylene-5,6,7,8-tetrahydrofolate + H2O = 2-dehydropantoate + (6S)-5,6,7,8-tetrahydrofolate. Its pathway is cofactor biosynthesis; (R)-pantothenate biosynthesis; (R)-pantoate from 3-methyl-2-oxobutanoate: step 1/2. Its function is as follows. Catalyzes the reversible reaction in which hydroxymethyl group from 5,10-methylenetetrahydrofolate is transferred onto alpha-ketoisovalerate to form ketopantoate. The protein is 3-methyl-2-oxobutanoate hydroxymethyltransferase of Gloeobacter violaceus (strain ATCC 29082 / PCC 7421).